We begin with the raw amino-acid sequence, 411 residues long: Alpha-galactosidase (411 aa).

The signal sequence occupies residues 1–24; that stretch reads MATHYSIIGGMIIVVLLMIIGSEG. A propeptide spanning residues 25-47 is cleaved from the precursor; that stretch reads GRLLEKKNRTSAEAEHYNVRRYL. The N-linked (GlcNAc...) asparagine glycan is linked to Asn32. Residues Cys68 and Cys100 are joined by a disulfide bond. Asn145 carries N-linked (GlcNAc...) asparagine glycosylation. The cysteines at positions 148 and 179 are disulfide-linked. Asp177 functions as the Nucleophile in the catalytic mechanism. Position 210 to 214 (210 to 214) interacts with substrate; sequence EWGWE. Residue Asp232 is the Proton donor of the active site. Asn352 is a glycosylation site (N-linked (GlcNAc...) asparagine).

This sequence belongs to the glycosyl hydrolase 27 family.

The enzyme catalyses Hydrolysis of terminal, non-reducing alpha-D-galactose residues in alpha-D-galactosides, including galactose oligosaccharides, galactomannans and galactolipids.. Its function is as follows. Involved in the hydrolysis of the galactomannan, it splits alpha-linked galactose moieties. It is particularly suitable for the hydrolysis of guar gum to a gum with improved gelling properties. Preferentially cleaves alpha-1,6 glycoside linkages. This is Alpha-galactosidase from Cyamopsis tetragonoloba (Guar).